The sequence spans 140 residues: Large ribosomal subunit protein uL16c (140 aa).

Belongs to the universal ribosomal protein uL16 family. As to quaternary structure, part of the 50S ribosomal subunit.

It localises to the plastid. It is found in the chloroplast. The chain is Large ribosomal subunit protein uL16c from Psilotum nudum (Whisk fern).